The following is a 468-amino-acid chain: Mannan endo-1,4-beta-mannosidase 3 (468 aa).

The signal sequence occupies residues Met-1–Ala-23. A substrate-binding site is contributed by Trp-86. N-linked (GlcNAc...) asparagine glycosylation is present at Asn-152. A substrate-binding site is contributed by Asn-201. Catalysis depends on Glu-202, which acts as the Proton donor. Tyr-281 lines the substrate pocket. N-linked (GlcNAc...) asparagine glycosylation occurs at Asn-300. Glu-321 acts as the Nucleophile in catalysis. Residue Asn-333 is glycosylated (N-linked (GlcNAc...) asparagine). 2 residues coordinate substrate: Trp-364 and Asp-371. Residues Leu-415–Asp-436 form a disordered region. Positions Arg-416 to Arg-430 are enriched in basic residues.

The protein belongs to the glycosyl hydrolase 5 (cellulase A) family. In terms of tissue distribution, expressed in seeds.

The protein localises to the secreted. It carries out the reaction Random hydrolysis of (1-&gt;4)-beta-D-mannosidic linkages in mannans, galactomannans and glucomannans.. The polypeptide is Mannan endo-1,4-beta-mannosidase 3 (MAN3) (Oryza sativa subsp. japonica (Rice)).